The chain runs to 303 residues: Heme A synthase (303 aa).

Residues 1–8 lie on the Cytoplasmic side of the membrane; the sequence is MFGKKNLK. A helical membrane pass occupies residues 9-29; that stretch reads WLGVVATLMMTFVQLGGALVT. At 30-67 the chain is on the extracellular side; it reads KTGSADGCGSSWPLCHGALIPEFFPIDTIIELSHRAVS. C37 and C44 form a disulfide bridge. E60 is an active-site residue. Heme o is bound at residue H63. A helical membrane pass occupies residues 68–88; it reads ALSLLMVLWLVITAWKHIGYI. Residues 89–93 lie on the Cytoplasmic side of the membrane; the sequence is KEIKP. Residues 94–114 form a helical membrane-spanning segment; sequence LSIISVGFLLLQALIGAAAVI. Residues 115–125 lie on the Extracellular side of the membrane; sequence WQQNDYVLALH. H125 provides a ligand contact to heme o. Residues 126-146 traverse the membrane as a helical segment; sequence FGISLISFSSVFLITLIIFSI. The Cytoplasmic segment spans residues 147-163; that stretch reads DQKYEADELYIKKPLRR. A helical transmembrane segment spans residues 164-184; that stretch reads LTWLMAIIIYCGVYTGALVRH. Over 185–215 the chain is Extracellular; that stretch reads ADASLAYGGWPLPFHDLVPHSEQDWVQLTHR. Heme b is bound at residue H214. The chain crosses the membrane as a helical span at residues 216-236; sequence IMAFIVFTIIMITYIHAVKNY. Topologically, residues 237–244 are cytoplasmic; sequence PNNRTVHY. The helical transmembrane segment at 245–265 threads the bilayer; the sequence is GYTAAFILVILQVITGALSIM. Over 266–270 the chain is Extracellular; it reads TNVNL. The chain crosses the membrane as a helical span at residues 271-291; sequence IIALFHALFITYLFGMTTYFI. H276 provides a ligand contact to heme b. Topologically, residues 292-303 are cytoplasmic; the sequence is MLMLRSVRSDKQ.

The protein belongs to the COX15/CtaA family. Type 1 subfamily. In terms of assembly, interacts with CtaB. Heme b is required as a cofactor.

The protein localises to the cell membrane. It carries out the reaction Fe(II)-heme o + 2 A + H2O = Fe(II)-heme a + 2 AH2. It functions in the pathway porphyrin-containing compound metabolism; heme A biosynthesis; heme A from heme O: step 1/1. In terms of biological role, catalyzes the conversion of heme O to heme A by two successive hydroxylations of the methyl group at C8. The first hydroxylation forms heme I, the second hydroxylation results in an unstable dihydroxymethyl group, which spontaneously dehydrates, resulting in the formyl group of heme A. The chain is Heme A synthase from Staphylococcus aureus (strain Mu3 / ATCC 700698).